The chain runs to 192 residues: MIEFYSKARLPSRFGSFEIYVFKNDENKDHAVIVHGDVRGKSDVPVRIHSECLTGDVLGSMRCDCRDQLIESLKYIGSQPYGMLIYMRQEGRGIGLLNKIRAYNLQDQGLDTVEANLEQGLPVDERKYDYAVDVIKYFNIESIQLITNNPEKLKYLEEHGIKITKRIPIIIPPTKFDEFYLETKRERMGHLF.

47 to 51 (RIHSE) lines the GTP pocket. Zn(2+) contacts are provided by cysteine 52, cysteine 63, and cysteine 65. GTP is bound by residues glutamine 68, 90–92 (EGR), and threonine 112. The active-site Proton acceptor is aspartate 124. Residue arginine 126 is the Nucleophile of the active site. Threonine 147 and lysine 152 together coordinate GTP.

It belongs to the GTP cyclohydrolase II family. Zn(2+) serves as cofactor.

The enzyme catalyses GTP + 4 H2O = 2,5-diamino-6-hydroxy-4-(5-phosphoribosylamino)-pyrimidine + formate + 2 phosphate + 3 H(+). The protein operates within cofactor biosynthesis; riboflavin biosynthesis; 5-amino-6-(D-ribitylamino)uracil from GTP: step 1/4. Its function is as follows. Catalyzes the conversion of GTP to 2,5-diamino-6-ribosylamino-4(3H)-pyrimidinone 5'-phosphate (DARP), formate and pyrophosphate. The protein is GTP cyclohydrolase-2 of Picrophilus torridus (strain ATCC 700027 / DSM 9790 / JCM 10055 / NBRC 100828 / KAW 2/3).